We begin with the raw amino-acid sequence, 289 residues long: Zinc finger matrin-type protein 3 (289 aa).

The segment at 1–59 is disordered; the sequence is MILLQHAGLPPPKRPSSSPPMSVAARSTGALQLPPQKPFGQEASLPLAGEEEPPKGGEQ. The segment covering 9-18 has biased composition (pro residues); it reads LPPPKRPSSS. 2 consecutive Matrin-type zinc fingers follow at residues 70 to 100 and 147 to 177; these read LYCKLCNVTLNSAQQAQAHYQGKNHGKKLRN and DYCKLCDASFSSPAVAQAHYQGKNHAKRLRL. Residues 180–191 show a composition bias toward polar residues; the sequence is AQSNSFSDSSEV. A disordered region spans residues 180 to 200; the sequence is AQSNSFSDSSEVGQRRTRKEG. Residues 246–276 form a Matrin-type 3 zinc finger; it reads FYCSMCNVGAGEEVEFRQHLESKQHKSKVSE.

As to quaternary structure, interacts with dsRNA.

It localises to the nucleus. The protein localises to the nucleolus. In terms of biological role, acts as a bona fide target gene of p53/TP53. May play a role in the TP53-dependent growth regulatory pathway. May contribute to TP53-mediated apoptosis by regulation of TP53 expression and translocation to the nucleus and nucleolus. The chain is Zinc finger matrin-type protein 3 from Bos taurus (Bovine).